The following is a 942-amino-acid chain: E3 ubiquitin-protein ligase HACE1 (942 aa).

ANK repeat units follow at residues 23 to 55, 64 to 93, 97 to 126, 130 to 159, 163 to 192, 196 to 226, and 228 to 253; these read LPDDNETAVYTLMPMVMADQHRSVSELLSNSKF, VKRSLLHIAANCGSVECLVLLLKKGANPNY, SGCTPLHLAARNGQKKCMSKLLEYSADVNI, EGLTAIHWLAVNGRTELLHDLVQHVSNVDV, MGQTALHVACQNGHKTTVQCLLDSGADINR, SGATPLYFACSHGQRDTAQILLMRGAKYLPD, and NGITPLDLCVQGGYGETCEVLIQYHP. The segment at 428–459 is disordered; that stretch reads KGPDHQDATPTPSFAAAGTESRKELSTDTGDS. Residues 447 to 459 show a composition bias toward basic and acidic residues; sequence ESRKELSTDTGDS. An HECT domain is found at 607–942; that stretch reads NCAKLKQGIA…HCGSYGYTMA (336 aa). The active-site Glycyl thioester intermediate is cysteine 909.

It is found in the golgi apparatus. The protein resides in the golgi stack membrane. It localises to the cytoplasm. Its subcellular location is the endoplasmic reticulum. The enzyme catalyses S-ubiquitinyl-[E2 ubiquitin-conjugating enzyme]-L-cysteine + [acceptor protein]-L-lysine = [E2 ubiquitin-conjugating enzyme]-L-cysteine + N(6)-ubiquitinyl-[acceptor protein]-L-lysine.. Its pathway is protein modification; protein ubiquitination. Its function is as follows. E3 ubiquitin-protein ligase involved in Golgi membrane fusion and regulation of small GTPases. Acts as a regulator of Golgi membrane dynamics during the cell cycle: recruited to Golgi membrane by Rab proteins and regulates postmitotic Golgi membrane fusion. Acts by mediating ubiquitination during mitotic Golgi disassembly, ubiquitination serving as a signal for Golgi reassembly later, after cell division. The sequence is that of E3 ubiquitin-protein ligase HACE1 (HACE1) from Gallus gallus (Chicken).